A 1049-amino-acid chain; its full sequence is Cellulose synthase A catalytic subunit 4 [UDP-forming] (1049 aa).

Residues 1-215 (MEPNTMASFD…ISSSKISPYR (215 aa)) lie on the Cytoplasmic side of the membrane. Zn(2+)-binding residues include cysteine 23, cysteine 26, cysteine 42, cysteine 45, cysteine 50, cysteine 53, cysteine 65, and cysteine 68. The RING-type; degenerate zinc-finger motif lies at 23 to 69 (CKVCGDEVKDDDNGQTFVACHVCVYPVCKPCYEYERSNGNKCCPQCN). The segment at 76-98 (KGSPKIAGDEENNGPDDSDDELN) is disordered. Over residues 84–96 (DEENNGPDDSDDE) the composition is skewed to acidic residues. Serine 135 is subject to Phosphoserine. Residues 216-236 (IVIVLRLVILVFFFRFRILTP) traverse the membrane as a helical segment. Topologically, residues 237 to 239 (AKD) are extracellular. A helical membrane pass occupies residues 240 to 260 (AYPLWLISVICEIWFALSWIL). At 261 to 831 (DQFPKWFPIN…INTIVYPFTS (571 aa)) the chain is on the cytoplasmic side. 4 residues coordinate UDP-alpha-D-glucose: serine 299, lysine 305, glutamate 306, and aspartate 335. Residue aspartate 335 is part of the active site. Residues 389 to 416 (VKDRRAMKREYEEFKVRINALVAKAQKK) are a coiled coil. UDP-alpha-D-glucose is bound at residue lysine 476. The Mn(2+) site is built by lysine 477 and aspartate 501. The active site involves aspartate 748. Residues 832–852 (IPLLAYCTIPAVCLLTGKFII) form a helical membrane-spanning segment. Residues 853-857 (PTINN) lie on the Extracellular side of the membrane. The chain crosses the membrane as a helical span at residues 858–878 (FASIWFLALFLSIIATAILEL). Topologically, residues 879–895 (RWSGVSINDLWRNEQFW) are cytoplasmic. The helical transmembrane segment at 896–916 (VIGGVSAHLFAVFQGLLKVLF) threads the bilayer. Topologically, residues 917 to 945 (GVDTNFTVTSKGASDEADEFGDLYLFKWT) are extracellular. N-linked (GlcNAc...) asparagine glycosylation occurs at asparagine 921. A helical membrane pass occupies residues 946–966 (TLLIPPTTLIILNMVGVVAGV). Topologically, residues 967 to 977 (SDAINNGYGSW) are cytoplasmic. Residues 978–998 (GPLFGKLFFAFWVIVHLYPFL) traverse the membrane as a helical segment. The Extracellular portion of the chain corresponds to 999–1007 (KGLMGRQNR). The chain crosses the membrane as a helical span at residues 1008–1028 (TPTIVVLWSILLASIFSLVWV). Over 1029–1049 (RIDPFLPKQTGPLLKQCGVDC) the chain is Cytoplasmic.

It belongs to the glycosyltransferase 2 family. Plant cellulose synthase subfamily. In terms of assembly, interacts with CESA7 and CESA8. Assembly with CESA7 and CESA8 is required for functional complex and localization in secondary cell wall deposition sites. Interacts with STL1 and STL2, but not with GOT1. The cofactor is Zn(2+). It depends on Mn(2+) as a cofactor. In terms of processing, S-acylated. As to expression, confined to secondary cell wall developing tissues such as xylems and interfascicular regions. Expressed in roots, hypocotyls, leaves, inflorescences and flowers.

The protein resides in the cell membrane. The enzyme catalyses [(1-&gt;4)-beta-D-glucosyl](n) + UDP-alpha-D-glucose = [(1-&gt;4)-beta-D-glucosyl](n+1) + UDP + H(+). It participates in glycan metabolism; plant cellulose biosynthesis. Catalytic subunit of cellulose synthase terminal complexes ('rosettes'), required for beta-1,4-glucan microfibril crystallization, a major mechanism of the cell wall formation. Involved in the secondary cell wall formation. Required for the xylem cell wall thickening. This is Cellulose synthase A catalytic subunit 4 [UDP-forming] from Arabidopsis thaliana (Mouse-ear cress).